Consider the following 414-residue polypeptide: Ornithine aminotransferase (414 aa).

Cys154 and Cys163 are oxidised to a cystine. Lys262 carries the N6-(pyridoxal phosphate)lysine modification.

This sequence belongs to the class-III pyridoxal-phosphate-dependent aminotransferase family. In terms of assembly, homodimer. The cofactor is pyridoxal 5'-phosphate. In terms of processing, the disulfide bond between Cys-154 and Cys-163 is reduced by TRX1 which increases OAT catalytic activity.

The protein resides in the cytoplasm. The catalysed reaction is a 2-oxocarboxylate + L-ornithine = L-glutamate 5-semialdehyde + an L-alpha-amino acid. It carries out the reaction L-ornithine + 2-oxoglutarate = L-glutamate 5-semialdehyde + L-glutamate. Its pathway is amino-acid biosynthesis; L-proline biosynthesis; L-glutamate 5-semialdehyde from L-ornithine: step 1/1. Its activity is regulated as follows. Unlike for mammalian OATs, activity is increased by TRX1-mediated reduction of the disulfide bond between Cys-154 and Cys-163. Binding to TRX1 may also induce conformational changes that facilitate substrate binding. Its function is as follows. Catalyzes the transamination of alpha-ketoglutarate with ornithine or N-acetylornithine and of glutamate-5-semialdehyde with glutamate and alanine. The chain is Ornithine aminotransferase from Plasmodium yoelii yoelii.